The chain runs to 330 residues: Aspartate--ammonia ligase (330 aa).

It belongs to the class-II aminoacyl-tRNA synthetase family. AsnA subfamily.

The protein resides in the cytoplasm. It catalyses the reaction L-aspartate + NH4(+) + ATP = L-asparagine + AMP + diphosphate + H(+). It functions in the pathway amino-acid biosynthesis; L-asparagine biosynthesis; L-asparagine from L-aspartate (ammonia route): step 1/1. This Shigella sonnei (strain Ss046) protein is Aspartate--ammonia ligase.